The primary structure comprises 480 residues: Lysostaphin (480 aa).

Positions 1–23 (MKKTKNNYYTTPLAIGLSTFALA) are cleaved as a signal peptide. A propeptide spanning residues 24–234 (SIVYGGIQNE…ALVQNRTALR (211 aa)) is cleaved from the precursor. 13 repeat units span residues 49–61 (AEVE…VENT), 62–74 (AEVE…VENT), 75–87 (AEVE…VENT), 88–100 (AEVE…VENT), 101–113 (AEVE…VENT), 114–126 (AEVE…VENT), 127–139 (AEVE…VENT), 140–152 (AEVE…VENT), 153–165 (AEVE…VENT), 166–178 (AEVE…VENT), 179–191 (AEVE…VENT), 192–204 (AEVE…VENT), and 205–217 (AEVE…VENT). Residues 49 to 230 (AEVETSKPPV…ETSKALVQNR (182 aa)) are 14 X 13 AA tandem repeats of A-E-V-E-T-S-K-[AP]-P-V-E-N-T. The tract at residues 51-219 (VETSKPPVEN…SKAPVENTAE (169 aa)) is disordered. One copy of the 14; approximate repeat lies at 218–230 (AEVETSKALVQNR). Positions 266 and 270 each coordinate Zn(2+). H347 is a catalytic residue. H349 provides a ligand contact to Zn(2+). The SH3b domain maps to 400–468 (SESASFTPNT…YLPVRTWNKS (69 aa)).

Belongs to the peptidase M23B family. In terms of assembly, monomer. Requires Zn(2+) as cofactor.

The protein localises to the secreted. It carries out the reaction Hydrolysis of the -Gly-|-Gly- bond in the pentaglycine inter-peptide link joining staphylococcal cell wall peptidoglycans.. Functionally, lyses staphylococcal cells by hydrolyzing the polyglycine interpeptide bridges of the peptidoglycan. This is Lysostaphin (lss) from Staphylococcus staphylolyticus.